The chain runs to 132 residues: Small ribosomal subunit protein uS8 (132 aa).

The protein belongs to the universal ribosomal protein uS8 family. Part of the 30S ribosomal subunit. Contacts proteins S5 and S12.

Its function is as follows. One of the primary rRNA binding proteins, it binds directly to 16S rRNA central domain where it helps coordinate assembly of the platform of the 30S subunit. This Bartonella henselae (strain ATCC 49882 / DSM 28221 / CCUG 30454 / Houston 1) (Rochalimaea henselae) protein is Small ribosomal subunit protein uS8.